The sequence spans 293 residues: Acetyl-coenzyme A carboxylase carboxyl transferase subunit beta (293 aa).

Residues 29–293 (LWSKCPECGQ…GCKPMELTSA (265 aa)) form the CoA carboxyltransferase N-terminal domain. 4 residues coordinate Zn(2+): Cys33, Cys36, Cys52, and Cys55. The C4-type zinc-finger motif lies at 33-55 (CPECGQVVYLKDLKLNASVCANC).

It belongs to the AccD/PCCB family. Acetyl-CoA carboxylase is a heterohexamer composed of biotin carboxyl carrier protein (AccB), biotin carboxylase (AccC) and two subunits each of ACCase subunit alpha (AccA) and ACCase subunit beta (AccD). It depends on Zn(2+) as a cofactor.

Its subcellular location is the cytoplasm. The enzyme catalyses N(6)-carboxybiotinyl-L-lysyl-[protein] + acetyl-CoA = N(6)-biotinyl-L-lysyl-[protein] + malonyl-CoA. Its pathway is lipid metabolism; malonyl-CoA biosynthesis; malonyl-CoA from acetyl-CoA: step 1/1. Functionally, component of the acetyl coenzyme A carboxylase (ACC) complex. Biotin carboxylase (BC) catalyzes the carboxylation of biotin on its carrier protein (BCCP) and then the CO(2) group is transferred by the transcarboxylase to acetyl-CoA to form malonyl-CoA. This Synechococcus sp. (strain CC9605) protein is Acetyl-coenzyme A carboxylase carboxyl transferase subunit beta.